Reading from the N-terminus, the 250-residue chain is Ribosomal RNA small subunit methyltransferase J (250 aa).

Residues 101–102 (RD), 117–118 (ER), 153–154 (SS), and aspartate 171 contribute to the S-adenosyl-L-methionine site.

This sequence belongs to the methyltransferase superfamily. RsmJ family.

The protein localises to the cytoplasm. The enzyme catalyses guanosine(1516) in 16S rRNA + S-adenosyl-L-methionine = N(2)-methylguanosine(1516) in 16S rRNA + S-adenosyl-L-homocysteine + H(+). In terms of biological role, specifically methylates the guanosine in position 1516 of 16S rRNA. In Shigella boydii serotype 18 (strain CDC 3083-94 / BS512), this protein is Ribosomal RNA small subunit methyltransferase J.